Here is a 131-residue protein sequence, read N- to C-terminus: Large ribosomal subunit protein bL19 (131 aa).

It belongs to the bacterial ribosomal protein bL19 family.

In terms of biological role, this protein is located at the 30S-50S ribosomal subunit interface and may play a role in the structure and function of the aminoacyl-tRNA binding site. The sequence is that of Large ribosomal subunit protein bL19 from Anaeromyxobacter sp. (strain K).